Here is a 103-residue protein sequence, read N- to C-terminus: High-potential iron-sulfur protein (103 aa).

Positions 1 to 28 (MSNRRLFLKSIPIMAAAGAVGMAGLARA) are cleaved as a signal peptide. [4Fe-4S] cluster is bound by residues cysteine 66, cysteine 69, cysteine 82, and cysteine 96.

It belongs to the high-potential iron-sulfur protein (HiPIP) family. Homodimer.

The protein resides in the periplasm. In terms of biological role, specific class of high-redox-potential 4Fe-4S ferredoxins. Functions in anaerobic electron transport in most purple and in some other photosynthetic bacteria and in at least one genus (Paracoccus) of halophilic, denitrifying bacteria. The sequence is that of High-potential iron-sulfur protein (hip) from Ralstonia nicotianae (strain ATCC BAA-1114 / GMI1000) (Ralstonia solanacearum).